A 224-amino-acid polypeptide reads, in one-letter code: Cytidylate kinase (224 aa).

14 to 22 (GPAGSGKST) contributes to the ATP binding site.

Belongs to the cytidylate kinase family. Type 1 subfamily.

It localises to the cytoplasm. It carries out the reaction CMP + ATP = CDP + ADP. The catalysed reaction is dCMP + ATP = dCDP + ADP. The chain is Cytidylate kinase from Mycoplasmoides gallisepticum (strain R(low / passage 15 / clone 2)) (Mycoplasma gallisepticum).